The following is a 263-amino-acid chain: Endonuclease 8 (263 aa).

The active-site Schiff-base intermediate with DNA is the proline 2. Glutamate 3 (proton donor) is an active-site residue. Catalysis depends on lysine 53, which acts as the Proton donor; for beta-elimination activity. Glutamine 70, arginine 125, and asparagine 169 together coordinate DNA. The FPG-type zinc finger occupies 229–263; the sequence is KVFHRDGEACERCGGIIEKTTLSSRPFYWCPHCQK. The Proton donor; for delta-elimination activity role is filled by arginine 253.

This sequence belongs to the FPG family. It depends on Zn(2+) as a cofactor.

It carries out the reaction 2'-deoxyribonucleotide-(2'-deoxyribose 5'-phosphate)-2'-deoxyribonucleotide-DNA = a 3'-end 2'-deoxyribonucleotide-(2,3-dehydro-2,3-deoxyribose 5'-phosphate)-DNA + a 5'-end 5'-phospho-2'-deoxyribonucleoside-DNA + H(+). Involved in base excision repair of DNA damaged by oxidation or by mutagenic agents. Acts as a DNA glycosylase that recognizes and removes damaged bases. Has a preference for oxidized pyrimidines, such as thymine glycol, 5,6-dihydrouracil and 5,6-dihydrothymine. Has AP (apurinic/apyrimidinic) lyase activity and introduces nicks in the DNA strand. Cleaves the DNA backbone by beta-delta elimination to generate a single-strand break at the site of the removed base with both 3'- and 5'-phosphates. This Salmonella heidelberg (strain SL476) protein is Endonuclease 8.